A 328-amino-acid chain; its full sequence is tRNA uridine(34) hydroxylase (328 aa).

Residues 130–224 (LDEDTVVLDT…YGKDPEVQGE (95 aa)) form the Rhodanese domain. The Cysteine persulfide intermediate role is filled by C184.

Belongs to the TrhO family.

The enzyme catalyses uridine(34) in tRNA + AH2 + O2 = 5-hydroxyuridine(34) in tRNA + A + H2O. Its function is as follows. Catalyzes oxygen-dependent 5-hydroxyuridine (ho5U) modification at position 34 in tRNAs. The polypeptide is tRNA uridine(34) hydroxylase (Streptococcus pyogenes serotype M3 (strain SSI-1)).